Here is a 176-residue protein sequence, read N- to C-terminus: MKFLFDLFPIILFFVAFKIWGIFTATAVAIVATLVQIAWVAFRHRKVDPMLWVSLGVVTVFGGATLVLHNDTFIKWKPTVLYWAFSVALIVSQLAFNKNLIEAMMGKQITLPHAIWGKLNVVWGVFFVLLGLVNLFVAYNYTTDQWVNFKLFGATGCLVVFIVGQSLWLSKYMKEE.

5 helical membrane passes run 24 to 44 (TATAVAIVATLVQIAWVAFRH), 49 to 69 (PMLWVSLGVVTVFGGATLVLH), 76 to 96 (WKPTVLYWAFSVALIVSQLAF), 119 to 139 (LNVVWGVFFVLLGLVNLFVAY), and 149 to 169 (FKLFGATGCLVVFIVGQSLWL).

It belongs to the YciB family.

The protein localises to the cell inner membrane. In terms of biological role, plays a role in cell envelope biogenesis, maintenance of cell envelope integrity and membrane homeostasis. This chain is Inner membrane-spanning protein YciB, found in Paraburkholderia xenovorans (strain LB400).